Here is a 345-residue protein sequence, read N- to C-terminus: uncharacterized protein (345 aa).

The protein belongs to the cycloisomerase 2 family.

This is an uncharacterized protein from Staphylococcus saprophyticus subsp. saprophyticus (strain ATCC 15305 / DSM 20229 / NCIMB 8711 / NCTC 7292 / S-41).